The following is a 357-amino-acid chain: LINE-1 retrotransposable element ORF1 protein (357 aa).

Positions 1-40 are disordered; it reads MAKGKRKNPTNRNQDHSPSSERSTPTPPSPGHPNTTENLD. A coiled-coil region spans residues 59-156; that stretch reads HKSLKDLQES…IENIDTTVKE (98 aa). The segment at 179 to 274 is RNA recognition motif (RRM) domain; it reads NLRIIGIDEN…KGRPIRITPD (96 aa). A C-terminal domain (CTD) region spans residues 278-339; that stretch reads ETMKARRAWT…STNPALQRII (62 aa).

This sequence belongs to the transposase 22 family. Homotrimer (via coiled coil domain). May also form larger homooligomers. Interacts with Tex19.1 and UBR2. Interacts with MOV10. In terms of processing, polyubiquitinated, probably by UBR2, which induces its degradation. In terms of tissue distribution, expressed in meiotic spermatocytes and in the cerebellum (at protein level).

It localises to the nucleus. It is found in the nucleolus. The protein localises to the cytoplasm. Its subcellular location is the cytoplasmic ribonucleoprotein granule. The protein resides in the stress granule. In terms of biological role, nucleic acid-binding protein which is essential for retrotransposition of LINE-1 elements in the genome. Functions as a nucleic acid chaperone binding its own transcript and therefore preferentially mobilizing the transcript from which they are encoded. This is LINE-1 retrotransposable element ORF1 protein from Mus musculus (Mouse).